An 876-amino-acid polypeptide reads, in one-letter code: Alanine--tRNA ligase (876 aa).

4 residues coordinate Zn(2+): His568, His572, Cys669, and His673.

It belongs to the class-II aminoacyl-tRNA synthetase family. It depends on Zn(2+) as a cofactor.

It localises to the cytoplasm. The enzyme catalyses tRNA(Ala) + L-alanine + ATP = L-alanyl-tRNA(Ala) + AMP + diphosphate. Its function is as follows. Catalyzes the attachment of alanine to tRNA(Ala) in a two-step reaction: alanine is first activated by ATP to form Ala-AMP and then transferred to the acceptor end of tRNA(Ala). Also edits incorrectly charged Ser-tRNA(Ala) and Gly-tRNA(Ala) via its editing domain. The polypeptide is Alanine--tRNA ligase (Sulfurihydrogenibium sp. (strain YO3AOP1)).